The primary structure comprises 639 residues: Tetracycline resistance protein TetM from transposon Tn5251 (639 aa).

A tr-type G domain is found at 1 to 242; it reads MKIINIGVLA…VITNKFYSST (242 aa). Residues 10-17, 74-78, and 128-131 each bind GTP; these read AHVDAGKT, DTPGH, and NKID.

This sequence belongs to the TRAFAC class translation factor GTPase superfamily. Classic translation factor GTPase family. TetM/TetO subfamily.

Functionally, abolishes the inhibitory effect of tetracyclin on protein synthesis by a non-covalent modification of the ribosomes. The chain is Tetracycline resistance protein TetM from transposon Tn5251 (tetM(5251)) from Streptococcus pneumoniae.